Reading from the N-terminus, the 386-residue chain is MNSLDAFAAAKLADLEERGLRRTLRENWREDGLWISVDGQKLLSFSCNDYLNLTHHPALKAAAIRAIETYGVGAGASRLVTGNHPLLEKLEARLAALKGSEAACIFGAGYLANTGIIPTLVGKDDLILIDELAHACLFAGTQLSPATVRIFRHNDIAEVESLLATNRAHYRHALLLTDGVFSMDGDLAPLPALAEICTHHDCWLMADDAHGLGVIGQGRGSRHAFDPAPVIPLQMGTLSKAIGGYGGYLCASKPVIDLMKTRARTVVYSTGLPPALAASALAALDLIESDSDLVKKPLANARLFTTRLGLSPAQSPIVPIILGTVEAVMSAAQTLFTQGFLVTPIRPPTVPEGTARLRFAFTAGHAAEDILHLADVVAPLMPAKAR.

Substrate is bound by residues R22 and R29. 109 to 110 (GY) lines the pyridoxal 5'-phosphate pocket. A substrate-binding site is contributed by H134. Pyridoxal 5'-phosphate-binding positions include S182, 207–210 (DDAH), and 237–240 (TLSK). The residue at position 240 (K240) is an N6-(pyridoxal phosphate)lysine. T349 provides a ligand contact to substrate.

It belongs to the class-II pyridoxal-phosphate-dependent aminotransferase family. BioF subfamily. Homodimer. Requires pyridoxal 5'-phosphate as cofactor.

The enzyme catalyses 6-carboxyhexanoyl-[ACP] + L-alanine + H(+) = (8S)-8-amino-7-oxononanoate + holo-[ACP] + CO2. It functions in the pathway cofactor biosynthesis; biotin biosynthesis. Its function is as follows. Catalyzes the decarboxylative condensation of pimeloyl-[acyl-carrier protein] and L-alanine to produce 8-amino-7-oxononanoate (AON), [acyl-carrier protein], and carbon dioxide. In Beijerinckia indica subsp. indica (strain ATCC 9039 / DSM 1715 / NCIMB 8712), this protein is 8-amino-7-oxononanoate synthase.